The primary structure comprises 392 residues: Probable tRNA sulfurtransferase (392 aa).

The THUMP domain maps to 59-166 (DEIIERVKKV…ECSFVFTKKV (108 aa)). ATP-binding positions include 183–184 (LL), 208–209 (HF), Arg-265, Gly-287, and Gln-296.

Belongs to the ThiI family.

The protein localises to the cytoplasm. It catalyses the reaction [ThiI sulfur-carrier protein]-S-sulfanyl-L-cysteine + a uridine in tRNA + 2 reduced [2Fe-2S]-[ferredoxin] + ATP + H(+) = [ThiI sulfur-carrier protein]-L-cysteine + a 4-thiouridine in tRNA + 2 oxidized [2Fe-2S]-[ferredoxin] + AMP + diphosphate. The catalysed reaction is [ThiS sulfur-carrier protein]-C-terminal Gly-Gly-AMP + S-sulfanyl-L-cysteinyl-[cysteine desulfurase] + AH2 = [ThiS sulfur-carrier protein]-C-terminal-Gly-aminoethanethioate + L-cysteinyl-[cysteine desulfurase] + A + AMP + 2 H(+). It functions in the pathway cofactor biosynthesis; thiamine diphosphate biosynthesis. Functionally, catalyzes the ATP-dependent transfer of a sulfur to tRNA to produce 4-thiouridine in position 8 of tRNAs, which functions as a near-UV photosensor. Also catalyzes the transfer of sulfur to the sulfur carrier protein ThiS, forming ThiS-thiocarboxylate. This is a step in the synthesis of thiazole, in the thiamine biosynthesis pathway. The sulfur is donated as persulfide by IscS. This chain is Probable tRNA sulfurtransferase, found in Alkaliphilus metalliredigens (strain QYMF).